A 378-amino-acid polypeptide reads, in one-letter code: MGMLKIGKNCSVCKEWQEHCYWSHMADHSKHFLKHMVGDFTESMTVPARFANNFNGHISEEVNLRSPSGETWSIGVANSDAGELVLQPGWKEFVDGNGIEEGDCLLFRYSGVSSSFDVLIFDPSGCEKASPHFVGSHGFGRAENSAGAEQGGRNGRRTPPIVDGDNGHRHHLEMTLHRNSCRSIPRACKRSLFSDETEAKENDGEDEDVVAAAEGGRYGEYYFSRHGRVAEYNLREEDREEISRVPVPVQPGNPVFVQVIHSSHVRSSKYCIVGVSPEFAGKYLGAVEREVVLERASRGGEWHVPFVHRQNTRGFYGAGWRQFAGDNRLVAHDVCLFELTMVDAAASGGGNRRRRWSRRPTMTVHVLRRVRGRFVLLR.

The TF-B3 1 DNA-binding region spans 29 to 124 (SKHFLKHMVG…SFDVLIFDPS (96 aa)). The tract at residues 140 to 159 (GRAENSAGAEQGGRNGRRTP) is disordered. Residues 256–370 (FVQVIHSSHV…TMTVHVLRRV (115 aa)) constitute a DNA-binding region (TF-B3 2).

It localises to the nucleus. In Oryza sativa subsp. japonica (Rice), this protein is B3 domain-containing protein Os03g0622200.